The sequence spans 154 residues: Ribonuclease 1 (154 aa).

The protein belongs to the BetVI family.

The protein localises to the cytoplasm. In terms of biological role, catalyzes the two-stage endonucleolytic cleavage to 3'-phosphomononucleotides and 3'-phosphooligonucleotides with 2',3'-cyclic phosphate intermediates. In Panax ginseng (Korean ginseng), this protein is Ribonuclease 1.